The chain runs to 302 residues: Sulfate adenylyltransferase subunit 2 (302 aa).

It belongs to the PAPS reductase family. CysD subfamily. In terms of assembly, heterodimer composed of CysD, the smaller subunit, and CysN.

It catalyses the reaction sulfate + ATP + H(+) = adenosine 5'-phosphosulfate + diphosphate. It functions in the pathway sulfur metabolism; hydrogen sulfide biosynthesis; sulfite from sulfate: step 1/3. With CysN forms the ATP sulfurylase (ATPS) that catalyzes the adenylation of sulfate producing adenosine 5'-phosphosulfate (APS) and diphosphate, the first enzymatic step in sulfur assimilation pathway. APS synthesis involves the formation of a high-energy phosphoric-sulfuric acid anhydride bond driven by GTP hydrolysis by CysN coupled to ATP hydrolysis by CysD. This Aeromonas hydrophila subsp. hydrophila (strain ATCC 7966 / DSM 30187 / BCRC 13018 / CCUG 14551 / JCM 1027 / KCTC 2358 / NCIMB 9240 / NCTC 8049) protein is Sulfate adenylyltransferase subunit 2.